The following is a 153-amino-acid chain: Ribosome maturation factor RimP (153 aa).

This sequence belongs to the RimP family.

It localises to the cytoplasm. Its function is as follows. Required for maturation of 30S ribosomal subunits. The polypeptide is Ribosome maturation factor RimP (Psychromonas ingrahamii (strain DSM 17664 / CCUG 51855 / 37)).